The following is a 151-amino-acid chain: Phosphopantetheine adenylyltransferase (151 aa).

A substrate-binding site is contributed by S9. ATP-binding positions include 9-10 (SF) and H17. 3 residues coordinate substrate: K41, T73, and R87. ATP is bound by residues 88–90 (GLR), E98, and 122–128 (TSFISSS).

It belongs to the bacterial CoaD family. In terms of assembly, homohexamer. Requires Mg(2+) as cofactor.

The protein localises to the cytoplasm. It carries out the reaction (R)-4'-phosphopantetheine + ATP + H(+) = 3'-dephospho-CoA + diphosphate. Its pathway is cofactor biosynthesis; coenzyme A biosynthesis; CoA from (R)-pantothenate: step 4/5. In terms of biological role, reversibly transfers an adenylyl group from ATP to 4'-phosphopantetheine, yielding dephospho-CoA (dPCoA) and pyrophosphate. The protein is Phosphopantetheine adenylyltransferase of Flavobacterium psychrophilum (strain ATCC 49511 / DSM 21280 / CIP 103535 / JIP02/86).